The primary structure comprises 237 residues: Endonuclease NucS (237 aa).

Belongs to the NucS endonuclease family.

It is found in the cytoplasm. In terms of biological role, cleaves both 3' and 5' ssDNA extremities of branched DNA structures. This chain is Endonuclease NucS, found in Saccharolobus islandicus (strain L.S.2.15 / Lassen #1) (Sulfolobus islandicus).